We begin with the raw amino-acid sequence, 419 residues long: UPF0761 membrane protein ACIAD3168 (419 aa).

A run of 6 helical transmembrane segments spans residues 42 to 62 (ALTY…LVII), 105 to 125 (LTVI…STIE), 148 to 168 (WTII…SSTV), 186 to 206 (AFIL…ILYW), 212 to 232 (TVPM…FELL), and 252 to 272 (AFAA…IVLL).

The protein belongs to the UPF0761 family.

It is found in the cell inner membrane. This Acinetobacter baylyi (strain ATCC 33305 / BD413 / ADP1) protein is UPF0761 membrane protein ACIAD3168.